Here is a 568-residue protein sequence, read N- to C-terminus: Phosphoribosylaminoimidazole carboxylase (568 aa).

The ATP-grasp domain maps to Lys-110–Thr-298. Gly-138–Ala-193 provides a ligand contact to ATP.

The protein in the C-terminal section; belongs to the AIR carboxylase family. Class I subfamily.

The catalysed reaction is 5-amino-1-(5-phospho-D-ribosyl)imidazole-4-carboxylate + H(+) = 5-amino-1-(5-phospho-beta-D-ribosyl)imidazole + CO2. It functions in the pathway purine metabolism; IMP biosynthesis via de novo pathway; 5-amino-1-(5-phospho-D-ribosyl)imidazole-4-carboxylate from 5-amino-1-(5-phospho-D-ribosyl)imidazole (carboxylase route): step 1/1. The chain is Phosphoribosylaminoimidazole carboxylase (ADE2) from Candida albicans (strain SC5314 / ATCC MYA-2876) (Yeast).